We begin with the raw amino-acid sequence, 775 residues long: Mitochondrial 15S rRNA processing factor CCM1 (775 aa).

The transit peptide at M1 to R18 directs the protein to the mitochondrion. The segment at H35–L65 is disordered. The segment covering S41–D55 has biased composition (polar residues). Residues S56–L65 are compositionally biased toward basic and acidic residues. PPR repeat units follow at residues P289 to I323, S324 to Q355, G362 to P396, N397 to P432, and T433 to S467.

The protein belongs to the CCM1 family. Binds to mitochondrial small subunit 15S rRNA.

The protein localises to the mitochondrion. In terms of biological role, regulates mitochondrial small subunit maturation by controlling 15S rRNA 5'-end processing. Localizes to the 5' precursor of the 15S rRNA in a position that is subsequently occupied by mS47 in the mature yeast mtSSU. Uses structure and sequence-specific RNA recognition, binding to a single-stranded region of the precursor and specifically recognizing bases -6 to -1. The exchange of Ccm1 for mS47 is coupled to the irreversible removal of precursor rRNA that is accompanied by conformational changes of the mitoribosomal proteins uS5m and mS26. These conformational changes signal completion of 5'-end rRNA processing through protection of the mature 5'-end of the 15S rRNA and stabilization of mS47. The removal of the 5' precursor together with the dissociation of Ccm1 may be catalyzed by the 5'-3' exoribonuclease Pet127. Involved in the specific removal of group I introns in mitochondrial encoded transcripts. This is Mitochondrial 15S rRNA processing factor CCM1 (CCM1) from Scheffersomyces stipitis (strain ATCC 58785 / CBS 6054 / NBRC 10063 / NRRL Y-11545) (Yeast).